Consider the following 2214-residue polypeptide: Multifunctional protein URA2 (2214 aa).

Position 2 is an N-acetylalanine (Ala2). The segment at 2–400 is GATase (Glutamine amidotransferase); the sequence is ATIAPTAPIT…PGPRDTEFLF (399 aa). L-glutamine is bound by residues Ser64, Gly273, and Gly275. Residues 228 to 413 enclose the Glutamine amidotransferase type-1 domain; sequence RILAIDVGMK…IQAVKEFKYT (186 aa). Residue Cys302 is the Nucleophile; for GATase activity of the active site. The L-glutamine site is built by Leu303, Gln306, Asn344, Gly346, and Phe347. Active-site for GATase activity residues include His386 and Glu388. The interval 401–440 is linker; sequence DVFIQAVKEFKYTQVLKPIAFPGGLLEDNVKAHPRIEAKK. A CPSase A region spans residues 440-980; the sequence is KVLVLGSGGL…DSHDLSFDDH (541 aa). Residues 440–1482 are CPSase (Carbamoyl phosphate synthase); it reads KVLVLGSGGL…TNVKCAKLLI (1043 aa). ATP contacts are provided by Arg558, Arg598, Gly604, Gly605, Lys635, Met637, Glu642, Gly668, Ile669, His670, Gln711, and Glu725. ATP-grasp domains are found at residues 562-754 and 1099-1290; these read SNAI…KLGL and SRML…KAIM. Residues Gln711, Glu725, and Asn727 each coordinate Mg(2+). Mn(2+)-binding residues include Gln711, Glu725, and Asn727. A CPSase B region spans residues 981 to 1482; the sequence is GVMVLGSGVY…TNVKCAKLLI (502 aa). Positions 1135, 1174, 1176, 1181, 1206, 1207, 1208, 1209, 1249, and 1261 each coordinate ATP. Mg(2+)-binding residues include Gln1249, Glu1261, and Asn1263. Residues Gln1249, Glu1261, and Asn1263 each contribute to the Mn(2+) site. The MGS-like domain occupies 1356–1508; that stretch reads FKLPKKNILL…QTSHRTITLP (153 aa). The linker stretch occupies residues 1483–1492; sequence EAISRNITLD. The segment at 1493–1821 is defective DHOase domain; the sequence is VSERDAQTSH…YNGETLVLSG (329 aa). The interval 1822-1909 is linker; the sequence is ELVSPGAKGK…NLIRSNNPFR (88 aa). Residue Lys1853 forms a Glycyl lysine isopeptide (Lys-Gly) (interchain with G-Cter in ubiquitin) linkage. Phosphoserine; by PKA is present on Ser1857. The segment at 1910-2214 is ATCase (Aspartate transcarbamylase); it reads GRHILSIKQF…LLAMVMGVDM (305 aa). Carbamoyl phosphate-binding residues include Arg1962 and Thr1963. Lys1990 provides a ligand contact to L-aspartate. Carbamoyl phosphate-binding residues include Arg2011, His2039, and Gln2042. The L-aspartate site is built by Arg2072 and Arg2134. Residues Leu2173 and Pro2174 each coordinate carbamoyl phosphate.

It in the N-terminal section; belongs to the CarA family. In the 2nd section; belongs to the CarB family. The protein in the 3rd section; belongs to the metallo-dependent hydrolases superfamily. DHOase family. CAD subfamily. This sequence in the C-terminal section; belongs to the aspartate/ornithine carbamoyltransferase superfamily. ATCase family. Mg(2+) serves as cofactor. It depends on Mn(2+) as a cofactor.

Its subcellular location is the cytoplasm. The enzyme catalyses hydrogencarbonate + L-glutamine + 2 ATP + H2O = carbamoyl phosphate + L-glutamate + 2 ADP + phosphate + 2 H(+). It carries out the reaction L-glutamine + H2O = L-glutamate + NH4(+). The catalysed reaction is hydrogencarbonate + NH4(+) + 2 ATP = carbamoyl phosphate + 2 ADP + phosphate + 2 H(+). It catalyses the reaction carbamoyl phosphate + L-aspartate = N-carbamoyl-L-aspartate + phosphate + H(+). It participates in pyrimidine metabolism; UMP biosynthesis via de novo pathway; (S)-dihydroorotate from bicarbonate: step 1/3. It functions in the pathway pyrimidine metabolism; UMP biosynthesis via de novo pathway; (S)-dihydroorotate from bicarbonate: step 2/3. Both CPSase and ATCase activities are feedback inhibited by the end product UTP. In terms of biological role, multifunctional protein that encodes the first 2 enzymatic activities of the de novo pyrimidine pathway: carbamoylphosphate synthetase (CPSase; EC 6.3.5.5) and aspartate transcarbamylase (ATCase; EC 2.1.3.2). The CPSase-function is accomplished in 2 steps, by a glutamine-dependent amidotransferase activity (GATase) that binds and cleaves glutamine to produce ammonia, followed by an ammonium-dependent carbamoyl phosphate synthetase, which reacts with the ammonia, hydrogencarbonate and ATP to form carbamoyl phosphate. The endogenously produced carbamoyl phosphate is sequestered and channeled to the ATCase active site. ATCase then catalyzes the formation of carbamoyl-L-aspartate from L-aspartate and carbamoyl phosphate. The sequence is that of Multifunctional protein URA2 (URA2) from Saccharomyces cerevisiae (strain ATCC 204508 / S288c) (Baker's yeast).